Consider the following 478-residue polypeptide: Pathogenicity cluster 5 protein d (478 aa).

The signal sequence occupies residues 1 to 19 (MQIQNLIAALAGMAVVAEA). 2 disordered regions span residues 35-89 (RQNK…GQAN) and 299-400 (NGGK…GGKG). The span at 38–64 (KGGNNNNNNNNNNNNNNNNNKNNGGNN) shows a compositional bias: low complexity. The span at 65-89 (QLCLNPNNVQKGSQQAGTPKQGQAN) shows a compositional bias: polar residues. The segment covering 316-326 (NNDGGGGGNDG) has biased composition (gly residues). 2 stretches are compositionally biased toward low complexity: residues 327-348 (GNNSANNSGSGNKQGGKQQNGA) and 379-393 (TQAGGSASNSATNGN). Residues N328 and N332 are each glycosylated (N-linked (GlcNAc...) asparagine).

Its subcellular location is the secreted. In terms of biological role, secreted protein required for appressorial penetration of intact host epidermal cells and for pathogenicit, but not for subsequent biotrophic and necrotrophic colonization of leaves. This chain is Pathogenicity cluster 5 protein d, found in Colletotrichum graminicola (strain M1.001 / M2 / FGSC 10212) (Maize anthracnose fungus).